We begin with the raw amino-acid sequence, 715 residues long: Polyribonucleotide nucleotidyltransferase (715 aa).

The Mg(2+) site is built by Asp-497 and Asp-503. The KH domain maps to 564-623; sequence PRLLTMKIDPEQIGLVIGPGGKTIKSITEQTGSKIDIADDGTVTIAAIQAKKAERARDLI. The S1 motif domain maps to 633–701; sequence GEVYLGRVTR…NKGRLNLTRL (69 aa).

This sequence belongs to the polyribonucleotide nucleotidyltransferase family. Mg(2+) serves as cofactor.

It is found in the cytoplasm. It carries out the reaction RNA(n+1) + phosphate = RNA(n) + a ribonucleoside 5'-diphosphate. Its function is as follows. Involved in mRNA degradation. Catalyzes the phosphorolysis of single-stranded polyribonucleotides processively in the 3'- to 5'-direction. This Crocosphaera subtropica (strain ATCC 51142 / BH68) (Cyanothece sp. (strain ATCC 51142)) protein is Polyribonucleotide nucleotidyltransferase.